We begin with the raw amino-acid sequence, 157 residues long: GTP-dependent dephospho-CoA kinase (157 aa).

Positions 40, 59, 61, 107, and 128 each coordinate GTP.

This sequence belongs to the GTP-dependent DPCK family.

The enzyme catalyses 3'-dephospho-CoA + GTP = GDP + CoA + H(+). It participates in cofactor biosynthesis; coenzyme A biosynthesis. Functionally, catalyzes the GTP-dependent phosphorylation of the 3'-hydroxyl group of dephosphocoenzyme A to form coenzyme A (CoA). The chain is GTP-dependent dephospho-CoA kinase from Desulfurococcus amylolyticus (strain DSM 18924 / JCM 16383 / VKM B-2413 / 1221n) (Desulfurococcus kamchatkensis).